The sequence spans 673 residues: Vasorin (673 aa).

The N-terminal stretch at 1-24 (MHSRSCLPPLLLLLLVLLGSGVQG) is a signal peptide. The LRRNT domain maps to 25–53 (CPSGCQCNQPQTVFCTARQGTTVPRDVPP). The Extracellular segment spans residues 25–576 (CPSGCQCNQP…VTQAREGNLP (552 aa)). LRR repeat units lie at residues 54 to 75 (DTVG…CFAG), 78 to 99 (GLQL…IFQP), 102 to 123 (NLSN…TFRG), 126 to 147 (RLER…AFDA), 150 to 170 (RLLE…LHLP), 171 to 192 (RLLL…ILDT), 194 to 215 (NVEA…LFGR), 218 to 239 (NLHD…IQGL), 241 to 265 (GLTR…AGLT), and 266 to 288 (ALQE…SSLF). N-linked (GlcNAc...) asparagine glycans are attached at residues Asn-102 and Asn-118. The N-linked (GlcNAc...) asparagine glycan is linked to Asn-274. The 54-residue stretch at 299-352 (NPFNCLCPLSWFGPWVRENHVVLASPEETRCHFPPKNAGRLLLDLDYADFGCPV) folds into the LRRCT domain. The tract at residues 369 to 389 (PTLSTSSQAPTWPSLTEPTTQ) is disordered. Polar residues predominate over residues 370 to 389 (TLSTSSQAPTWPSLTEPTTQ). The EGF-like domain maps to 406 to 443 (QPQDCPASICLNGGSCRLGARHHWECLCPEGFIGLYCE). Intrachain disulfides connect Cys-410–Cys-421, Cys-415–Cys-431, and Cys-433–Cys-442. One can recognise a Fibronectin type-III domain in the interval 463-559 (PLLPLSIEPV…ACGEANTSQA (97 aa)). Residues Asn-501, Asn-529, and Asn-555 are each glycosylated (N-linked (GlcNAc...) asparagine). Residues 577–597 (LLIAPALAAVLLAVLAAAGAA) form a helical membrane-spanning segment. Residues 598-673 (YCVRRARATS…QGVLPAKHYI (76 aa)) lie on the Cytoplasmic side of the membrane. A disordered region spans residues 608–648 (TAQDKGQVGPGTGPLELEGVKAPLEPGSKATEGGGEALSGG).

In terms of assembly, interacts with TGFB1, TGFB2 and TGFB3. N-glycosylated.

Its subcellular location is the membrane. In terms of biological role, may act as an inhibitor of TGF-beta signaling. The polypeptide is Vasorin (Vasn) (Mus musculus (Mouse)).